Reading from the N-terminus, the 183-residue chain is Adenine phosphoribosyltransferase (183 aa).

Belongs to the purine/pyrimidine phosphoribosyltransferase family. As to quaternary structure, homodimer.

Its subcellular location is the cytoplasm. The enzyme catalyses AMP + diphosphate = 5-phospho-alpha-D-ribose 1-diphosphate + adenine. Its pathway is purine metabolism; AMP biosynthesis via salvage pathway; AMP from adenine: step 1/1. Its function is as follows. Catalyzes a salvage reaction resulting in the formation of AMP, that is energically less costly than de novo synthesis. The sequence is that of Adenine phosphoribosyltransferase from Corynebacterium kroppenstedtii (strain DSM 44385 / JCM 11950 / CIP 105744 / CCUG 35717).